Consider the following 148-residue polypeptide: Probable histone H2B.1 (148 aa).

The span at 1–32 (MAPKGEKKPAEKKPAEEKKSTVAEKAPAEKKP) shows a compositional bias: basic and acidic residues. Positions 1–57 (MAPKGEKKPAEKKPAEEKKSTVAEKAPAEKKPKAGKKLPKEGGSAAGEKKKKRSKKS) are disordered. 3 positions are modified to N6-acetyllysine: Lys-7, Lys-36, and Lys-37. A Glycyl lysine isopeptide (Lys-Gly) (interchain with G-Cter in ubiquitin) cross-link involves residue Lys-144.

It belongs to the histone H2B family. The nucleosome is a histone octamer containing two molecules each of H2A, H2B, H3 and H4 assembled in one H3-H4 heterotetramer and two H2A-H2B heterodimers. The octamer wraps approximately 147 bp of DNA. Post-translationally, can be acetylated to form H2BK6ac, H2BK33ac and H2BK34ac. Monoubiquitinated to form H2BK143ub1; may give a specific tag for epigenetic transcriptional activation.

The protein resides in the nucleus. Its subcellular location is the chromosome. In terms of biological role, core component of nucleosome. Nucleosomes wrap and compact DNA into chromatin, limiting DNA accessibility to the cellular machineries which require DNA as a template. Histones thereby play a central role in transcription regulation, DNA repair, DNA replication and chromosomal stability. DNA accessibility is regulated via a complex set of post-translational modifications of histones, also called histone code, and nucleosome remodeling. This chain is Probable histone H2B.1, found in Medicago truncatula (Barrel medic).